The primary structure comprises 99 residues: NADH-quinone oxidoreductase subunit K (99 aa).

Transmembrane regions (helical) follow at residues 3–23, 28–48, and 59–79; these read LVNY…TVLV, IIMF…FVAF, and VVAF…LAII.

The protein belongs to the complex I subunit 4L family. In terms of assembly, NDH-1 is composed of 14 different subunits. Subunits NuoA, H, J, K, L, M, N constitute the membrane sector of the complex.

Its subcellular location is the cell membrane. It carries out the reaction a quinone + NADH + 5 H(+)(in) = a quinol + NAD(+) + 4 H(+)(out). In terms of biological role, NDH-1 shuttles electrons from NADH, via FMN and iron-sulfur (Fe-S) centers, to quinones in the respiratory chain. The immediate electron acceptor for the enzyme in this species is believed to be a menaquinone. Couples the redox reaction to proton translocation (for every two electrons transferred, four hydrogen ions are translocated across the cytoplasmic membrane), and thus conserves the redox energy in a proton gradient. The protein is NADH-quinone oxidoreductase subunit K of Beutenbergia cavernae (strain ATCC BAA-8 / DSM 12333 / CCUG 43141 / JCM 11478 / NBRC 16432 / NCIMB 13614 / HKI 0122).